The chain runs to 1637 residues: Endoribonuclease Dicer homolog 3b (1637 aa).

Positions 1–40 (MADDEAAVLPPPPPLPPPCRPHRQLRPRGSRPTADTTPRT) are disordered. Positions 9–19 (LPPPPPLPPPC) are enriched in pro residues. Positions 20–29 (RPHRQLRPRG) are enriched in basic residues. In terms of domain architecture, Helicase ATP-binding spans 46-222 (VFEAALRGNT…LHNCEAHISQ (177 aa)). 59-66 (LDTGSGKT) serves as a coordination point for ATP. Positions 169-172 (DECH) match the DECH box motif. The region spanning 404-556 (SFGSSNEVLC…ALYRHPNALS (153 aa)) is the Helicase C-terminal domain. Residues 581-671 (CVNLIRKYCE…VPLTEEPMDT (91 aa)) enclose the Dicer dsRNA-binding fold domain. The 125-residue stretch at 882 to 1006 (EIIHLANKSL…VPPELLIHLD (125 aa)) folds into the PAZ domain. The RNase III 1 domain occupies 1031–1200 (ASQLRREIGY…LVGAYYVGGG (170 aa)). Residues Asp1214, Asp1309, and Ser1312 each contribute to the Mg(2+) site. The RNase III 2 domain maps to 1241–1389 (IEELEAKLKY…IAGAVFIDTD (149 aa)). DRBM domains lie at 1412 to 1481 (LALP…DLKQ) and 1545 to 1629 (GPRS…KLQE).

Belongs to the helicase family. Dicer subfamily. As to quaternary structure, may interact with ARGONAUTE1 or PINHEAD through their common PAZ domains. Requires Mg(2+) as cofactor. Mn(2+) is required as a cofactor.

The protein localises to the nucleus. In terms of biological role, probably involved in the RNA silencing pathway. May cleave double-stranded RNA to produce short 21-24 nucleotides (nt) RNAs which target the selective destruction of complementary RNAs. This Oryza sativa subsp. japonica (Rice) protein is Endoribonuclease Dicer homolog 3b (DCL3B).